The following is a 235-amino-acid chain: Pro-opiomelanocortin (235 aa).

The N-terminal stretch at 1–26 (MPRFCYSRSGALLLALLLQTSIDVWS) is a signal peptide. Phe-87 is modified (phenylalanine amide). The tract at residues 88-126 (GPRNSSSAGSAAQRRAEEEAVWGDGSPEPSPREGKRSYS) is disordered. The segment covering 90-100 (RNSSSAGSAAQ) has biased composition (low complexity). Residue Asn-91 is glycosylated (N-linked (GlcNAc...) asparagine). The propeptide occupies 103 to 121 (AEEEAVWGDGSPEPSPREG). The segment covering 117–126 (SPREGKRSYS) has biased composition (basic and acidic residues). The residue at position 124 (Ser-124) is an N-acetylserine; in Corticotropin. Val-136 is subject to Valine amide. The N-linked (GlcNAc...) asparagine glycan is linked to Asn-152. Residue Ser-154 is modified to Phosphoserine. A disordered region spans residues 179-210 (ESDAEKDDGPYRVEHFRWSNPPKDKRYGGFMT). A compositionally biased stretch (basic and acidic residues) spans 185–205 (DDGPYRVEHFRWSNPPKDKRY).

This sequence belongs to the POMC family. In terms of processing, specific enzymatic cleavages at paired basic residues yield the different active peptides. In terms of tissue distribution, ACTH and MSH are produced by the pituitary gland.

It is found in the secreted. Stimulates the adrenal glands to release cortisol. In terms of biological role, anorexigenic peptide. Increases the pigmentation of skin by increasing melanin production in melanocytes. Functionally, increases the pigmentation of skin by increasing melanin production in melanocytes. Its function is as follows. Endogenous orexigenic opiate. Endogenous opiate. This Mus musculus (Mouse) protein is Pro-opiomelanocortin (Pomc).